The sequence spans 496 residues: RNA-binding motif protein, Y chromosome, family 1 member B (496 aa).

One can recognise an RRM domain in the interval 8–85; the sequence is GKLFIGGLNR…KAIKVEQAKK (78 aa). Disordered regions lie at residues 67–349 and 452–496; these read DMNG…HRDY and KDQR…SSRY. Composition is skewed to low complexity over residues 97–114 and 149–159; these read PASS…SARG and PVKRGPSSRSG. Polar residues predominate over residues 175 to 184; it reads NSWMGSQGPM. Composition is skewed to basic and acidic residues over residues 204–214, 242–253, 276–289, 313–326, 335–349, and 484–496; these read RNDRMSTRHDG, DNGHSNRDEHSS, AYRD…DESY, GYRD…HESY, SSRE…HRDY, and GESR…SSRY.

In terms of assembly, interacts with splicing factor proteins SFRS3/SRP20, TRA2B/SFRS10, KHDRBS1/SAM68 and KHDRBS3. Testis-specific.

It is found in the nucleus. Functionally, RNA-binding protein which may be involved in spermatogenesis. Required for sperm development, possibly by participating in pre-mRNA splicing in the testis. The chain is RNA-binding motif protein, Y chromosome, family 1 member B (RBMY1B) from Homo sapiens (Human).